A 203-amino-acid chain; its full sequence is SOSS complex subunit B1-A (203 aa).

A DNA-binding region (OB) is located at residues 22 to 92; that stretch reads IVLETGRVTK…TLYTGRGGDL (71 aa). The segment at 110–203 is disordered; that stretch reads EPNPEYIAQQ…GKESRRTGKR (94 aa). Over residues 118–140 the composition is skewed to low complexity; sequence QQSQSKQGQQESGTGTNNHNSSS. Over residues 149-182 the composition is skewed to polar residues; it reads ENGNGSNSSGPPAHQSTAPAHSASGRITRSQPNH.

It belongs to the SOSS-B family. SOSS-B1 subfamily. As to quaternary structure, component of the SOSS complex, composed of soss-b (soss-b1/nabp2 or soss-b2/nabp1), soss-a/ints3 and soss-c/inip. SOSS complexes containing soss-b1/nabp2 are more abundant than complexes containing soss-b2/nabp1.

The protein resides in the nucleus. Component of the SOSS complex, a multiprotein complex that functions downstream of the MRN complex to promote DNA repair and G2/M checkpoint. In the SOSS complex, acts as a sensor of single-stranded DNA that binds to single-stranded DNA. The SOSS complex associates with DNA lesions and influences diverse endpoints in the cellular DNA damage response including cell-cycle checkpoint activation, recombinational repair and maintenance of genomic stability. Required for efficient homologous recombination-dependent repair of double-strand breaks (DSBs). This is SOSS complex subunit B1-A (nabp2-a) from Xenopus laevis (African clawed frog).